A 310-amino-acid polypeptide reads, in one-letter code: Putative F-box protein PP2-B2 (310 aa).

The tract at residues 1–34 (MIQSTMGHKQSVDSRGKGRKVPGSSSMVQKHRVE) is disordered. The region spanning 44-90 (PSLFDNLPEDCISNIISFTSPRDACVAASVSKTFESAVNSDSVWDKF) is the F-box domain.

The sequence is that of Putative F-box protein PP2-B2 (PP2B2) from Arabidopsis thaliana (Mouse-ear cress).